The sequence spans 413 residues: L-cysteine:1D-myo-inositol 2-amino-2-deoxy-alpha-D-glucopyranoside ligase (413 aa).

Residues 1–21 (MQSWSDTALPSVPGQGPPLRL) are disordered. Cys43 contacts Zn(2+). L-cysteinyl-5'-AMP-binding positions include 43–46 (CGIT), Thr58, and 81–83 (NVT). Positions 45 to 55 (ITPYDATHLGH) match the 'HIGH' region motif. The short motif at 187–192 (ERGGDP) is the 'ERGGDP' region element. Trp227 contributes to the L-cysteinyl-5'-AMP binding site. Cys231 is a binding site for Zn(2+). 249-251 (GSD) contacts L-cysteinyl-5'-AMP. His256 serves as a coordination point for Zn(2+). Ile283 is a binding site for L-cysteinyl-5'-AMP. The 'KMSKS' region signature appears at 289-293 (KMSKS).

It belongs to the class-I aminoacyl-tRNA synthetase family. MshC subfamily. In terms of assembly, monomer. Requires Zn(2+) as cofactor.

It carries out the reaction 1D-myo-inositol 2-amino-2-deoxy-alpha-D-glucopyranoside + L-cysteine + ATP = 1D-myo-inositol 2-(L-cysteinylamino)-2-deoxy-alpha-D-glucopyranoside + AMP + diphosphate + H(+). Its function is as follows. Catalyzes the ATP-dependent condensation of GlcN-Ins and L-cysteine to form L-Cys-GlcN-Ins. This is L-cysteine:1D-myo-inositol 2-amino-2-deoxy-alpha-D-glucopyranoside ligase from Rhodococcus erythropolis (strain PR4 / NBRC 100887).